Consider the following 603-residue polypeptide: MSSEHIQNKLALLPDQPGCYLMKDRQGTIIYVGKAKILKNRVRSYFSGTHDSKTQRLVQEIVDFEYIVTSSNVEALLLEINLIKKHDPRFNIRLKDDKTYPFIKITNERHPRLIITRQVKKDKGKYFGPYPNVYAANEVKRILDRLYPLRKCSTLPNKVCLYYHLGQCLAPCVFDVEASKYKEMQDEIVAFLNGGYKTVKNDLMKKMQEAAENMEFEKAGEFRDQINAIETTMEKQKMTMNDFVDRDVFGYAIDKGWMCVQVFFIRQGKLIERDVSQFPFYNDADEDFLTFIGQFYQKANHIPPKEIYLPDDVDSEAVQAVVPDTKIIVPQRGNKKDLVKLAYKNAKIALNEKFMLLERNEERTVGAVERLGEAMGIPTPSRVEAFDNSNIHGTDPVSAMVTFLDGKPSKNDYRKYKIKTVEGPDDYATMREVIRRRYWRVLKEELPMPDLILIDGGKGQIDSAKDVLTNELGLDIPVAGLAKDDKHRTSQLLFGDPLEIVPLERNSQEFYLLQRMQDEVHRFAITFHRQLRSKTGFQSILDGIPGVGPGRKKKLLKHFGSMKKLKEASVEEIKEAGVPLNVAEEVHKHITAFNEKAKNTEQK.

Residues 15-92 form the GIY-YIG domain; the sequence is DQPGCYLMKD…IKKHDPRFNI (78 aa). One can recognise a UVR domain in the interval 197–232; sequence KTVKNDLMKKMQEAAENMEFEKAGEFRDQINAIETT.

The protein belongs to the UvrC family. As to quaternary structure, interacts with UvrB in an incision complex.

The protein localises to the cytoplasm. Its function is as follows. The UvrABC repair system catalyzes the recognition and processing of DNA lesions. UvrC both incises the 5' and 3' sides of the lesion. The N-terminal half is responsible for the 3' incision and the C-terminal half is responsible for the 5' incision. This is UvrABC system protein C from Listeria monocytogenes serotype 4b (strain CLIP80459).